A 606-amino-acid chain; its full sequence is Diphthine--ammonia ligase (606 aa).

It in the N-terminal section; belongs to the Diphthine--ammonia ligase family. This sequence in the C-terminal section; belongs to the RutC family.

It is found in the cytoplasm. The protein localises to the nucleus. The catalysed reaction is diphthine-[translation elongation factor 2] + NH4(+) + ATP = diphthamide-[translation elongation factor 2] + AMP + diphosphate + H(+). It functions in the pathway protein modification; peptidyl-diphthamide biosynthesis. Amidase that catalyzes the last step of diphthamide biosynthesis using ammonium and ATP. Diphthamide biosynthesis consists in the conversion of an L-histidine residue in the translation elongation factor eEF-2 (eft201 or eft202) to diphthamide. Has a role in meiosis. The polypeptide is Diphthine--ammonia ligase (mug71) (Schizosaccharomyces pombe (strain 972 / ATCC 24843) (Fission yeast)).